The primary structure comprises 64 residues: Sperm protamine P1 (64 aa).

Residues 1 to 64 (MVRYRRHSRS…QSRRRRRRRY (64 aa)) form a disordered region.

This sequence belongs to the protamine P1 family. In terms of tissue distribution, testis.

The protein resides in the nucleus. The protein localises to the chromosome. In terms of biological role, protamines substitute for histones in the chromatin of sperm during the haploid phase of spermatogenesis. They compact sperm DNA into a highly condensed, stable and inactive complex. In Dromiciops gliroides (Monito del Monte), this protein is Sperm protamine P1 (PRM1).